The primary structure comprises 416 residues: MFSQSLTIEQVDPDLWQAIKGEVQRQEDHIELIASENYASPAVLQAQGTVLTNKYAEGYPGKRYYGGCRYVDIVEQLAIDRLRNLFNAEYVNVQPHSGSQANAAVYLSALKPGDTLLGMSLAHGGHLTHGSAVNMSGKIFNSISYGLNPETEEIDYAELERLAHEHKPRMIVAGASSYARVIDWKAFRQIADNVGAYLFVDMAHYAGLIAAGYYPNPVGIADFVTSTTHKTLRGPRGGVIMAKPEHEKALNSAVFPQTQGGPLMHVIAAKAVAFKEASSQAFKDYQKQVIENARVMARVLQQRGLRIVSGRTDCHMFLVDLRAKNLTGREAESALEAAHITVNKNAIPNDPQKPFVTSGIRIGTPAITTRGFKEPESEELANLVADVLDAPANTAVLDQVARKAQALCTKFPVYGN.

(6S)-5,6,7,8-tetrahydrofolate is bound by residues Leu-121 and 125 to 127 (GHL). Lys-230 carries the post-translational modification N6-(pyridoxal phosphate)lysine.

Belongs to the SHMT family. As to quaternary structure, homodimer. Pyridoxal 5'-phosphate is required as a cofactor.

The protein resides in the cytoplasm. It carries out the reaction (6R)-5,10-methylene-5,6,7,8-tetrahydrofolate + glycine + H2O = (6S)-5,6,7,8-tetrahydrofolate + L-serine. Its pathway is one-carbon metabolism; tetrahydrofolate interconversion. It functions in the pathway amino-acid biosynthesis; glycine biosynthesis; glycine from L-serine: step 1/1. Catalyzes the reversible interconversion of serine and glycine with tetrahydrofolate (THF) serving as the one-carbon carrier. This reaction serves as the major source of one-carbon groups required for the biosynthesis of purines, thymidylate, methionine, and other important biomolecules. Also exhibits THF-independent aldolase activity toward beta-hydroxyamino acids, producing glycine and aldehydes, via a retro-aldol mechanism. The chain is Serine hydroxymethyltransferase from Nitrosomonas europaea (strain ATCC 19718 / CIP 103999 / KCTC 2705 / NBRC 14298).